The sequence spans 651 residues: Forkhead box protein K2 (651 aa).

Residues 1-13 show a composition bias toward low complexity; the sequence is MAAAAALSGAGAP. The disordered stretch occupies residues 1–29; sequence MAAAAALSGAGAPPAGGGAGGGGSPPGGW. Residues 14-26 show a composition bias toward gly residues; sequence PAGGGAGGGGSPP. The residue at position 24 (serine 24) is a Phosphoserine. Residues 48–119 form the FHA domain; that stretch reads VTIGRNSSQG…NGVFVDGVFQ (72 aa). The interval 120 to 162 is required for interaction with DVL2 and SUDS3; that stretch reads RRGAPPLQLPRVCTFRFPSTNIKITFTALSSEKREKQEAPESP. Residue arginine 135 is modified to Omega-N-methylarginine. 2 disordered regions span residues 150–171 and 194–251; these read SEKR…PHIS and TISA…SKPP. Residues lysine 152 and lysine 155 each participate in a glycyl lysine isopeptide (Lys-Gly) (interchain with G-Cter in SUMO2) cross-link. Polar residues predominate over residues 194–203; sequence TISAANSCPS. Serine 230 carries the post-translational modification Phosphoserine. The segment covering 233 to 249 has biased composition (basic and acidic residues); sequence ENEKEASGGDSPKDDSK. A DNA-binding region (fork-head) is located at residues 249–344; sequence KPPYSYAQLI…EQAFRKRRPR (96 aa). The interval 291–309 is DNA-binding; major groove; the sequence is KGWQNSIRHNLSLNRYFIK. Leucine 301, serine 302, asparagine 304, and phenylalanine 307 together coordinate Mg(2+). DNA-binding; minor groove regions lie at residues 319-323 and 339-344; these read KGSFW and RKRRPR. The tract at residues 350 to 399 is disordered; that stretch reads RTPLGPLSSRSAPASPNHAGVLSAHSSGAQTPESLSREGSPAPLEPEPGA. At serine 364 the chain carries Phosphoserine. Polar residues predominate over residues 373 to 383; it reads AHSSGAQTPES. Residues serine 389, serine 415, and serine 419 each carry the phosphoserine modification. Lysine 518 is covalently cross-linked (Glycyl lysine isopeptide (Lys-Gly) (interchain with G-Cter in SUMO2)). Position 590 is a phosphoserine (serine 590). Over residues 601-614 the composition is skewed to polar residues; sequence ASASLPTKRQNGDQ. Positions 601-623 are disordered; that stretch reads ASASLPTKRQNGDQAEQPELKRV. Lysine 624 is covalently cross-linked (Glycyl lysine isopeptide (Lys-Gly) (interchain with G-Cter in SUMO2)).

In terms of assembly, component of SIN3A-, but not SIN3B-, containing multiprotein complexes. Interacts with DVL1, DVL2 (when phosphorylated) and DVL3; the interaction induces DVL2 nuclear translocation. Interacts with SUDS3. Interacts with BAP1 (when phosphorylated); leading to recruit the PR-DUB complex and repress FOXK2 target genes. Accessory component of the polycomb repressive deubiquitinase (PR-DUB) complex, at least composed of BAP1, one of ASXL1, ASXL2 or (probably) ASXL3 and one of MBD5 or MBD6. The PR-DUB core associates with a number of accessory proteins, including FOXK1, FOXK2, KDM1B, HCFC1 and OGT. Hyperphosphorylated during mitosis by CDK1 and, to a lower extent, CDK2. Phosphorylation at Ser-364 and Ser-419 affects stability by promoting degradation. In terms of tissue distribution, expressed in a wide range of adult brain regions, namely the piriform cortex, the major islands of Calleja and cells lining the lateral ventricles, the bed nucleus of stria terminalis, the paraventricular thalamic nucleus, habenula and all structures of the hippocampus. Also present in the hypothalamus, cerebral cortex and in the Purkinje cell layer in the cerebellum. Additionally expressed in dopamine neurons of the substantia and more sparsely in the ventral tegmental area.

It localises to the nucleus. Its subcellular location is the cytoplasm. Functionally, transcriptional regulator involved in different processes such as glucose metabolism, aerobic glycolysis and autophagy. Recognizes and binds the forkhead DNA sequence motif (5'-GTAAACA-3') and can both act as a transcription activator or repressor, depending on the context. Together with FOXK1, acts as a key regulator of metabolic reprogramming towards aerobic glycolysis, a process in which glucose is converted to lactate in the presence of oxygen. Acts by promoting expression of enzymes for glycolysis (such as hexokinase-2 (HK2), phosphofructokinase, pyruvate kinase (PKLR) and lactate dehydrogenase), while suppressing further oxidation of pyruvate in the mitochondria by up-regulating pyruvate dehydrogenase kinases PDK1 and PDK4. Probably plays a role in gluconeogenesis during overnight fasting, when lactate from white adipose tissue and muscle is the main substrate. Together with FOXK1, acts as a negative regulator of autophagy in skeletal muscle: in response to starvation, enters the nucleus, binds the promoters of autophagy genes and represses their expression, preventing proteolysis of skeletal muscle proteins. In addition to the 5'-GTAAACA-3' DNA motif, also binds the 5'-TGANTCA-3' palindromic DNA motif, and co-associates with JUN/AP-1 to activate transcription. Also able to bind to a minimal DNA heteroduplex containing a G/T-mismatch with 5'-TRT[G/T]NB-3' sequence. Binds to NFAT-like motifs (purine-rich) in the IL2 promoter. Positively regulates WNT/beta-catenin signaling by translocating DVL proteins into the nucleus. Accessory component of the polycomb repressive deubiquitinase (PR-DUB) complex; recruits the PR-DUB complex to specific FOXK2-bound genes. This chain is Forkhead box protein K2, found in Mus musculus (Mouse).